The following is a 727-amino-acid chain: Synaptic vesicle glycoprotein 2C (727 aa).

Residues 1–57 (MEDSYKDRTSLMKGAKDIAKEVKKQTVKKVNQAVDRAQDEYTQRSYSRFQDEDDDDD) form an interaction with SYT1 region. The Cytoplasmic segment spans residues 1 to 154 (MEDSYKDRTS…CGHGRFQWAL (154 aa)). The disordered stretch occupies residues 22–120 (VKKQTVKKVN…QPKGDEYKDR (99 aa)). Phosphoserine is present on residues S75 and S76. T79 bears the Phosphothreonine mark. Residues 155–175 (FFVLGMALMADGVEVFVVGFV) form a helical membrane-spanning segment. The Extracellular portion of the chain corresponds to 176-191 (LPSAETDLCIPNSGSG). The helical transmembrane segment at 192 to 212 (WLGSIVYLGMMVGAFFWGGLA) threads the bilayer. At 213-226 (DKVGRKQSLLICMS) the chain is on the cytoplasmic side. A helical transmembrane segment spans residues 227–247 (VNGFFAFLSSFVQGYGFFLLC). A topological domain (extracellular) is located at residue R248. Residues 249 to 269 (LLSGFGIGGAIPTVFSYFAEV) form a helical membrane-spanning segment. The Cytoplasmic segment spans residues 270–280 (LAREKRGEHLS). A helical transmembrane segment spans residues 281–301 (WLCMFWMIGGIYASAMAWAII). Residues 302 to 320 (PHYGWSFSMGSAYQFHSWR) are Extracellular-facing. Residues 321–341 (VFVIVCALPCVSSVVALTFMP) form a helical membrane-spanning segment. Residues 342 to 437 (ESPRFLLEVG…PVRENTIKLT (96 aa)) lie on the Cytoplasmic side of the membrane. A helical membrane pass occupies residues 438–458 (IVWFTLSFGYYGLSVWFPDVI). The Extracellular segment spans residues 459–578 (KHLQSDEYAL…CQITFDDDYS (120 aa)). Y466 carries the phosphotyrosine modification. 5 N-linked (GlcNAc...) asparagine glycosylation sites follow: N480, N484, N534, N559, and N565. The interval 529 to 566 (NTYFKNCTFIDTLFENTDFEPYKFIDSEFQNCSFLHNK) is (Microbial infection) C.botulinum neurotoxin type A-binding. Residues 579 to 599 (AYWIYFVNFLGTLAVLPGNIV) form a helical membrane-spanning segment. Topologically, residues 600–609 (SALLMDRIGR) are cytoplasmic. Residues 610 to 630 (LTMLGGSMVLSGISCFFLWFG) traverse the membrane as a helical segment. Over 631–636 (TSESMM) the chain is Extracellular. The helical transmembrane segment at 637–657 (IGMLCLYNGLTISAWNSLDVV) threads the bilayer. Topologically, residues 658-670 (TVELYPTDRRATG) are cytoplasmic. A helical membrane pass occupies residues 671–693 (FGFLNALCKAAAVLGNLIFGSLV). At 694-697 (SITK) the chain is on the extracellular side. A helical transmembrane segment spans residues 698–716 (AIPILLASTVLVCGGLVGL). The Cytoplasmic segment spans residues 717–727 (RLPDTRTQVLM).

It belongs to the major facilitator superfamily. Interacts with SYT1 in a calcium-dependent manner. In terms of assembly, (Microbial infection) Interacts with C.botulinum neurotoxin type A (BoNT/A, botA). As to quaternary structure, (Microbial infection) Interacts with C.botulinum neurotoxin type F (BoNT/F). Interaction requires glycosylation of SV2 proteins. In terms of processing, N-glycosylated. As to expression, expressed at high levels in very few brain areas including the striatum, midbrain and hindbrain, and in the olfactory bulb. Expressed at lower levels in cerebrum, hippocampus and cerebellum (at protein level). Mainly expressed in brain; also detected in lung, liver, kidney.

It localises to the cytoplasmic vesicle. It is found in the secretory vesicle. The protein resides in the synaptic vesicle membrane. Functionally, plays a role in the control of regulated secretion in neural and endocrine cells, enhancing selectively low-frequency neurotransmission. Positively regulates vesicle fusion by maintaining the readily releasable pool of secretory vesicles. Its function is as follows. (Microbial infection) Receptor for C.botulinum neurotoxin type A (BoNT/A, botA); the toxin binds Sv2c via extracellular loop 4. Restores uptake of BoNT/A in rat cells that are deleted for SV2 receptor. In terms of biological role, (Microbial infection) Possible receptor for C.botulinum neurotoxin type D (BoNT/D, botD); BoNT/D does not bind to extracellular loop 4 as do BoNT/A and BoNT/E. Another group does not find a convincing interaction with SV2. (Microbial infection) Receptor for C.botulinum neurotoxin type F (BoNT/F); binding requires glycosylation of Asn-573. This chain is Synaptic vesicle glycoprotein 2C (Sv2c), found in Rattus norvegicus (Rat).